Consider the following 180-residue polypeptide: Hypoxanthine-guanine phosphoribosyltransferase (180 aa).

Residues lysine 43 and glycine 44 each coordinate diphosphate. Positions 99 and 100 each coordinate Mg(2+). Aspartate 103 serves as the catalytic Proton acceptor. GMP contacts are provided by residues lysine 131, 152–153, and aspartate 159; that span reads FI. Arginine 165 provides a ligand contact to diphosphate.

It belongs to the purine/pyrimidine phosphoribosyltransferase family. The cofactor is Mg(2+).

The protein localises to the cytoplasm. The enzyme catalyses IMP + diphosphate = hypoxanthine + 5-phospho-alpha-D-ribose 1-diphosphate. It carries out the reaction GMP + diphosphate = guanine + 5-phospho-alpha-D-ribose 1-diphosphate. It participates in purine metabolism; IMP biosynthesis via salvage pathway; IMP from hypoxanthine: step 1/1. Its pathway is purine metabolism; GMP biosynthesis via salvage pathway; GMP from guanine: step 1/1. Functionally, purine salvage pathway enzyme that catalyzes the transfer of the ribosyl-5-phosphate group from 5-phospho-alpha-D-ribose 1-diphosphate (PRPP) to the N9 position of the 6-oxopurines hypoxanthine and guanine to form the corresponding ribonucleotides IMP (inosine 5'-monophosphate) and GMP (guanosine 5'-monophosphate), with the release of PPi. This chain is Hypoxanthine-guanine phosphoribosyltransferase (hpt), found in Streptococcus pyogenes serotype M3 (strain ATCC BAA-595 / MGAS315).